We begin with the raw amino-acid sequence, 263 residues long: Protein M1425_2021 (263 aa).

This sequence belongs to the CinA family.

In Saccharolobus islandicus (strain M.14.25 / Kamchatka #1) (Sulfolobus islandicus), this protein is Protein M1425_2021.